Consider the following 833-residue polypeptide: MTASPDPAQRIDALRRRIEDANYRYHVLDEPQMADADYDKLMRELEALERAHPELASADSPTQRVGHLAASRFAEVRHAMPMLSLGNAFSDEEVTEFVRRISERLEVRQPLFSAEPKLDGLAISLRYENGEFVQGATRGDGATGEDVSANLRTVKAIPLRLRGEGWPRVLEVRGEVYMPRAAFEAYNAQMRAQGGKILANPRNGAAGSLRQLDARITAQRPLSFFAYGVGEVSEGALPQAHSAILAQLRAWGFPVSALVEVVQGSDGLLAYYQRIGEARDGLAFDIDGVVYKLDDLAGQREMGFVSRAPRWAIAHKFPAQEQSTTVEAIEIQIGRTGAATPVARLKPVHVAGVIVTNATLHNADQIARLDVRVGDTVIVRRAGDVIPEVAAVVADQRPPGTQAWQMPTQCPVCGSEIVREEGQAVWRCSGELTCPAQRKEAFRHFVSRRAMDVDGLGEKFIEVLVDSGLVKGVADLYLLSVDQLLQLRLISTADSPHAFLREAREHLASGAYAQLEASVVGIGVDLAGERDVPQTWQADLLRAGLPSFDWNRKKIATKWAENLIEAIEISRDTTLERFLFALGIEHVGESTAKALSAWFGDLELIRHLPWPLFKRVPDIGGEVARSLGHFFDQAGNQKAIDHLLARKVRIGDTHPPSPKLRGELSLANLLEDLEIPKVTPIRAAQIATAFGSIDALRNGGPEPLVEAGVPQSVAESLAAWLLVPANDTLAVNAQRKLSELLAMLPEAGEEKTGPLDGQTVVITGTLAALTRDAAKQRLEALGAKVAGSVSKKTAFLVAGEEAGSKLDKAQSLGVEIWDEARLLAFLGDHGQQP.

Residues Asp-35 to Asp-39, Ser-84 to Leu-85, and Glu-115 contribute to the NAD(+) site. Lys-117 (N6-AMP-lysine intermediate) is an active-site residue. The NAD(+) site is built by Arg-138, Glu-175, Lys-292, and Lys-316. Zn(2+) is bound by residues Cys-410, Cys-413, Cys-428, and Cys-434. Positions Glu-750–Pro-833 constitute a BRCT domain.

It belongs to the NAD-dependent DNA ligase family. LigA subfamily. Requires Mg(2+) as cofactor. Mn(2+) serves as cofactor.

It carries out the reaction NAD(+) + (deoxyribonucleotide)n-3'-hydroxyl + 5'-phospho-(deoxyribonucleotide)m = (deoxyribonucleotide)n+m + AMP + beta-nicotinamide D-nucleotide.. In terms of biological role, DNA ligase that catalyzes the formation of phosphodiester linkages between 5'-phosphoryl and 3'-hydroxyl groups in double-stranded DNA using NAD as a coenzyme and as the energy source for the reaction. It is essential for DNA replication and repair of damaged DNA. The sequence is that of DNA ligase from Xanthomonas axonopodis pv. citri (strain 306).